A 183-amino-acid chain; its full sequence is Large ribosomal subunit protein uL5 (183 aa).

The protein belongs to the universal ribosomal protein uL5 family. In terms of assembly, part of the 50S ribosomal subunit; part of the 5S rRNA/L5/L18/L25 subcomplex. Contacts the 5S rRNA and the P site tRNA. Forms a bridge to the 30S subunit in the 70S ribosome.

Its function is as follows. This is one of the proteins that bind and probably mediate the attachment of the 5S RNA into the large ribosomal subunit, where it forms part of the central protuberance. In the 70S ribosome it contacts protein S13 of the 30S subunit (bridge B1b), connecting the 2 subunits; this bridge is implicated in subunit movement. Contacts the P site tRNA; the 5S rRNA and some of its associated proteins might help stabilize positioning of ribosome-bound tRNAs. The chain is Large ribosomal subunit protein uL5 from Tropheryma whipplei (strain TW08/27) (Whipple's bacillus).